The primary structure comprises 84 residues: Large ribosomal subunit protein bL27 (84 aa).

Residues 1–20 (MAHKKAGGSTRNGRDSNPKY) are disordered.

The protein belongs to the bacterial ribosomal protein bL27 family.

This Francisella philomiragia subsp. philomiragia (strain ATCC 25017 / CCUG 19701 / FSC 153 / O#319-036) protein is Large ribosomal subunit protein bL27.